We begin with the raw amino-acid sequence, 351 residues long: MSLLRRRFVKQSVNCITFLQILAERSFSTVKIPPGRRKTTEFDKLINEAGSSGDFETVRRLLNNRIVLGSFNTSDTFKFLTNTASYSSYLEDLRRVLPQIDGGFSRKNAYDILISRLCKLGRIDDALIVIGDMSNGRLGLTPSTYHPILCSLTRKYKIEEAWRVVESMRSKSVSMDVTAYNYFLTSHCYDGELESASEVMRKIEEDGNSPDSRSYDALVLGACRAGKVEAAMAILRRMEEDGVTVLYSTHAHVITGLVEGGYYALGLEFVMAYAGKDLRLDSESFGFLAGKLVKRKRYEEAMIVVKEMVMRGLRMGDELRQFYEGNVRYDDDDEDSLVQSERECYIEQKLN.

A mitochondrion-targeting transit peptide spans 1 to 27 (MSLLRRRFVKQSVNCITFLQILAERSF). PPR repeat units lie at residues 106 to 140 (RKNAYDILISRLCKLGRIDDALIVIGDMSNGRLGL), 141 to 175 (TPSTYHPILCSLTRKYKIEEAWRVVESMRSKSVSM), 176 to 210 (DVTAYNYFLTSHCYDGELESASEVMRKIEEDGNSP), 211 to 245 (DSRSYDALVLGACRAGKVEAAMAILRRMEEDGVTV), 246 to 280 (LYSTHAHVITGLVEGGYYALGLEFVMAYAGKDLRL), and 281 to 315 (DSESFGFLAGKLVKRKRYEEAMIVVKEMVMRGLRM).

This sequence belongs to the PPR family. P subfamily.

Its subcellular location is the mitochondrion. The chain is Pentatricopeptide repeat-containing protein At2g40240, mitochondrial from Arabidopsis thaliana (Mouse-ear cress).